Here is a 1006-residue protein sequence, read N- to C-terminus: Unconventional myosin-Id (1006 aa).

Alanine 2 is subject to N-acetylalanine. Residues 9–695 (FGKADFVLMD…TLFTLEELRA (687 aa)) form the Myosin motor domain. Position 102-109 (102-109 (GESGAGKT)) interacts with ATP. Phosphoserine is present on serine 200. Tyrosine 536 bears the Phosphotyrosine mark. The segment at 572 to 594 (MIALVDNLASKEPYYVRCIKPND) is actin-binding. IQ domains follow at residues 699–719 (VRIV…MRYK) and 721–741 (TKAA…SYIH). Residues 812-1005 (GQRADLGLQR…RSGFILSVPG (194 aa)) enclose the TH1 domain.

This sequence belongs to the TRAFAC class myosin-kinesin ATPase superfamily. Myosin family. In terms of assembly, interacts (via the two IQ motifs) with calmodulin. Binds an additional calmodulin chain via a third, C-terminal region. Interacts with F-actin.

Its subcellular location is the cytoplasm. It is found in the perikaryon. The protein localises to the cell projection. It localises to the dendrite. The protein resides in the early endosome. Its subcellular location is the cell cortex. Its function is as follows. Unconventional myosin that functions as actin-based motor protein with ATPase activity. Plays a role in endosomal protein trafficking, and especially in the transfer of cargo proteins from early to recycling endosomes. Required for normal planar cell polarity in ciliated tracheal cells, for normal rotational polarity of cilia, and for coordinated, unidirectional ciliary movement in the trachea. Required for normal, polarized cilia organization in brain ependymal epithelial cells. This Bos taurus (Bovine) protein is Unconventional myosin-Id (MYO1D).